We begin with the raw amino-acid sequence, 351 residues long: Anthranilate phosphoribosyltransferase (351 aa).

5-phospho-alpha-D-ribose 1-diphosphate-binding positions include G80, G83 to D84, T88, N90 to T93, K108 to S116, and S120. Residue G80 coordinates anthranilate. S92 lines the Mg(2+) pocket. Residue N111 participates in anthranilate binding. R166 is a binding site for anthranilate. Mg(2+) contacts are provided by D229 and E230.

It belongs to the anthranilate phosphoribosyltransferase family. As to quaternary structure, homodimer. Mg(2+) is required as a cofactor.

The catalysed reaction is N-(5-phospho-beta-D-ribosyl)anthranilate + diphosphate = 5-phospho-alpha-D-ribose 1-diphosphate + anthranilate. Its pathway is amino-acid biosynthesis; L-tryptophan biosynthesis; L-tryptophan from chorismate: step 2/5. In terms of biological role, catalyzes the transfer of the phosphoribosyl group of 5-phosphorylribose-1-pyrophosphate (PRPP) to anthranilate to yield N-(5'-phosphoribosyl)-anthranilate (PRA). The chain is Anthranilate phosphoribosyltransferase from Chlorobaculum parvum (strain DSM 263 / NCIMB 8327) (Chlorobium vibrioforme subsp. thiosulfatophilum).